A 119-amino-acid chain; its full sequence is Large ribosomal subunit protein bL17 (119 aa).

The protein belongs to the bacterial ribosomal protein bL17 family. As to quaternary structure, part of the 50S ribosomal subunit. Contacts protein L32.

The polypeptide is Large ribosomal subunit protein bL17 (Acholeplasma laidlawii (strain PG-8A)).